The primary structure comprises 240 residues: Tubulin alpha chain (240 aa).

GTP is bound at residue Asn-17. Glu-43 is an active-site residue.

It belongs to the tubulin family. Dimer of alpha and beta chains. A typical microtubule is a hollow water-filled tube with an outer diameter of 25 nm and an inner diameter of 15 nM. Alpha-beta heterodimers associate head-to-tail to form protofilaments running lengthwise along the microtubule wall with the beta-tubulin subunit facing the microtubule plus end conferring a structural polarity. Microtubules usually have 13 protofilaments but different protofilament numbers can be found in some organisms and specialized cells. Requires Mg(2+) as cofactor. Post-translationally, undergoes a tyrosination/detyrosination cycle, the cyclic removal and re-addition of a C-terminal tyrosine residue by the enzymes tubulin tyrosine carboxypeptidase (TTCP) and tubulin tyrosine ligase (TTL), respectively.

The protein localises to the cytoplasm. Its subcellular location is the cytoskeleton. The catalysed reaction is GTP + H2O = GDP + phosphate + H(+). Its function is as follows. Tubulin is the major constituent of microtubules, a cylinder consisting of laterally associated linear protofilaments composed of alpha- and beta-tubulin heterodimers. Microtubules grow by the addition of GTP-tubulin dimers to the microtubule end, where a stabilizing cap forms. Below the cap, tubulin dimers are in GDP-bound state, owing to GTPase activity of alpha-tubulin. The chain is Tubulin alpha chain from Octopus vulgaris (Common octopus).